A 545-amino-acid polypeptide reads, in one-letter code: Transducer protein Htr7 (545 aa).

Transmembrane regions (helical) follow at residues 10–30 (AVVAPLGDAVGAIGFGAAAAL), 44–64 (FWMAFTFASLLGVTWTVSLML), and 80–100 (PLMATTVAVFAIGGTATLAIV). The disordered stretch occupies residues 111–157 (AQRRQEAEEERAEAERAREKAEQKQAEAERQTAEAESAKQDARERSA). The segment covering 123–157 (EAERAREKAEQKQAEAERQTAEAESAKQDARERSA) has biased composition (basic and acidic residues). Positions 164-217 (ADLESQATEVGATLEAASDGDLTARVDATTDNAEIAEVATVVNDMLTTMERTID) constitute an HAMP domain. The 241-residue stretch at 236-476 (GAKEIQDASQ…RVVSSVDDIA (241 aa)) folds into the Methyl-accepting transducer domain. A Glutamate methyl ester (Glu) modification is found at Glu281. The segment at 521 to 545 (LNEFRTEATGTAHGEATDAPAGQSD) is disordered. Residues 527–539 (EATGTAHGEATDA) show a composition bias toward low complexity.

The protein belongs to the methyl-accepting chemotaxis (MCP) protein family. Methylated by CheR.

It is found in the cell membrane. In terms of biological role, potentially involved in chemo- or phototactic signal transduction. The chain is Transducer protein Htr7 (htr7) from Halobacterium salinarum (strain ATCC 29341 / DSM 671 / R1).